Reading from the N-terminus, the 92-residue chain is Envelope glycoprotein J (92 aa).

Residues 1 to 21 form the signal peptide; sequence MSLRAVWHLGLLGSLVGAVLA. Residues 22–49 lie on the Extracellular side of the membrane; it reads ATHRGPAANTTDPLTHAPVSPHPSPLGG. Residue Asn-30 is glycosylated (N-linked (GlcNAc...) asparagine; by host). Residues 50-70 traverse the membrane as a helical segment; the sequence is FAVPLVVGGLCAVVLGAACLL. The Cytoplasmic portion of the chain corresponds to 71–92; sequence ELLRRTCRGWGRYHPYMDPVVV.

Belongs to the alphaherpesvirinae glycoprotein J family.

It is found in the host Golgi apparatus membrane. It localises to the host endoplasmic reticulum membrane. Its subcellular location is the host endosome membrane. Its function is as follows. Inhibits host cell apoptosis. Induces an increase in reactive oxygen species (ROS) in the host cell. In Homo sapiens (Human), this protein is Envelope glycoprotein J (gJ).